Consider the following 206-residue polypeptide: Probable N-acetyltransferase 14 (206 aa).

The region spanning 55 to 206 (LRFVLASFAL…TLVREFSKDL (152 aa)) is the N-acetyltransferase domain. The helical transmembrane segment at 57–77 (FVLASFALALLLPVFLAVTAV) threads the bilayer.

It belongs to the camello family.

Its subcellular location is the membrane. Probable acetyltransferase. In terms of biological role, may act as a transcription factor regulating the expression of coproporphyrinogen oxidase by binding to a promoter regulatory element. This chain is Probable N-acetyltransferase 14 (NAT14), found in Macaca fascicularis (Crab-eating macaque).